We begin with the raw amino-acid sequence, 479 residues long: Glutamate receptor U1 (479 aa).

An N-terminal signal peptide occupies residues Met-1 to Gly-17. At Cys-18–Lys-163 the chain is on the extracellular side. A glycan (N-linked (GlcNAc...) asparagine) is linked at Asn-79. The helical transmembrane segment at Glu-164–Gly-184 threads the bilayer. At Arg-185 to Arg-229 the chain is on the cytoplasmic side. A helical transmembrane segment spans residues Ile-230–Phe-250. Topologically, residues Ala-251–Thr-414 are extracellular. A glycan (N-linked (GlcNAc...) asparagine) is linked at Asn-282. Residues Leu-415–Ile-435 form a helical membrane-spanning segment. Topologically, residues Glu-436 to Ser-479 are cytoplasmic.

It belongs to the glutamate-gated ion channel (TC 1.A.10.1) family. As to quaternary structure, homomeric.

It is found in the cell membrane. The protein resides in the postsynaptic cell membrane. Functionally, receptor for glutamate. L-glutamate acts as an excitatory neurotransmitter at many synapses in the central nervous system. The postsynaptic actions of Glu are mediated by a variety of receptors that are named according to their selective agonists. This receptor binds domoate &gt; kainate &gt; AMPA &gt; NBQX &gt; glutamate. The chain is Glutamate receptor U1 (kbp) from Xenopus laevis (African clawed frog).